Here is a 77-residue protein sequence, read N- to C-terminus: MSASAARGSTSLLKRAWNEIPDIVGGSALALAGIVMATIGVANYYAKDGDNRRYKLGYVVYRHDDPRALKVRNDEDD.

The chain crosses the membrane as a helical span at residues 23–45; that stretch reads IVGGSALALAGIVMATIGVANYY.

This sequence belongs to the complex I NDUFA3 subunit family. Complex I is composed of 43 different subunits.

Its subcellular location is the mitochondrion inner membrane. The protein resides in the cytoplasm. It localises to the myofibril. It is found in the sarcomere. The protein localises to the z line. Functionally, accessory subunit of the mitochondrial membrane respiratory chain NADH dehydrogenase (Complex I), that is believed not to be involved in catalysis. Complex I functions in the transfer of electrons from NADH to the respiratory chain. The immediate electron acceptor for the enzyme is believed to be ubiquinone. Required for the maintenance of muscle integrity and for cell proliferation in the wing imaginal disc epithelium, possibly by interacting with the chaperone-assisted selective autophagy (CASA) pathway. This is NADH dehydrogenase [ubiquinone] 1 alpha subcomplex subunit 3 from Drosophila melanogaster (Fruit fly).